Reading from the N-terminus, the 326-residue chain is Pectate lyase plyB (326 aa).

An N-terminal signal peptide occupies residues 1–15; it reads MRFTPLFLLAAVAIA. Positions 133, 162, and 166 each coordinate Ca(2+). The active site involves R219.

Belongs to the polysaccharide lyase 1 family. The cofactor is Ca(2+).

Its subcellular location is the secreted. The enzyme catalyses Eliminative cleavage of (1-&gt;4)-alpha-D-galacturonan to give oligosaccharides with 4-deoxy-alpha-D-galact-4-enuronosyl groups at their non-reducing ends.. It functions in the pathway glycan metabolism; pectin degradation; 2-dehydro-3-deoxy-D-gluconate from pectin: step 2/5. Functionally, pectinolytic enzyme consist of four classes of enzymes: pectin lyase, polygalacturonase, pectin methylesterase and rhamnogalacturonase. Among pectinolytic enzymes, pectin lyase is the most important in depolymerization of pectin, since it cleaves internal glycosidic bonds of highly methylated pectins. In Emericella nidulans (strain FGSC A4 / ATCC 38163 / CBS 112.46 / NRRL 194 / M139) (Aspergillus nidulans), this protein is Pectate lyase plyB (plyB).